The chain runs to 334 residues: Phosphate acyltransferase (334 aa).

The protein belongs to the PlsX family. Homodimer. Probably interacts with PlsY.

It localises to the cytoplasm. It carries out the reaction a fatty acyl-[ACP] + phosphate = an acyl phosphate + holo-[ACP]. It functions in the pathway lipid metabolism; phospholipid metabolism. In terms of biological role, catalyzes the reversible formation of acyl-phosphate (acyl-PO(4)) from acyl-[acyl-carrier-protein] (acyl-ACP). This enzyme utilizes acyl-ACP as fatty acyl donor, but not acyl-CoA. This chain is Phosphate acyltransferase, found in Clostridium tetani (strain Massachusetts / E88).